Here is a 121-residue protein sequence, read N- to C-terminus: Small ribosomal subunit protein uS10 (121 aa).

A disordered region spans residues 1–20; that stretch reads MTEQKAKSSKTSSEEAKKQK.

It belongs to the universal ribosomal protein uS10 family. In terms of assembly, part of the 30S ribosomal subunit.

In terms of biological role, involved in the binding of tRNA to the ribosomes. The sequence is that of Small ribosomal subunit protein uS10 from Mycoplasmoides gallisepticum (strain R(low / passage 15 / clone 2)) (Mycoplasma gallisepticum).